The chain runs to 266 residues: Small ribosomal subunit protein uS3 (266 aa).

One can recognise a KH type-2 domain in the interval 39 to 107 (VREYLKKKLK…PVHVNIEEIR (69 aa)). The segment at 218 to 266 (EVAEDKRPRRNARPGDRRPRRDGEGGAPGARRGAPRRGAGKPEDGKTGE) is disordered. Basic and acidic residues-rich tracts occupy residues 230-241 (RPGDRRPRRDGE) and 257-266 (GKPEDGKTGE).

The protein belongs to the universal ribosomal protein uS3 family. In terms of assembly, part of the 30S ribosomal subunit. Forms a tight complex with proteins S10 and S14.

Functionally, binds the lower part of the 30S subunit head. Binds mRNA in the 70S ribosome, positioning it for translation. This chain is Small ribosomal subunit protein uS3, found in Burkholderia ambifaria (strain MC40-6).